Reading from the N-terminus, the 144-residue chain is Large ribosomal subunit protein uL22 (144 aa).

Residues 1 to 38 (MAETQTTKKGAKRVRQPVPARRSKPNRPAKAAPGPHAS) form a disordered region. Positions 9–27 (KGAKRVRQPVPARRSKPNR) are enriched in basic residues.

The protein belongs to the universal ribosomal protein uL22 family. In terms of assembly, part of the 50S ribosomal subunit.

Its function is as follows. This protein binds specifically to 23S rRNA; its binding is stimulated by other ribosomal proteins, e.g. L4, L17, and L20. It is important during the early stages of 50S assembly. It makes multiple contacts with different domains of the 23S rRNA in the assembled 50S subunit and ribosome. Functionally, the globular domain of the protein is located near the polypeptide exit tunnel on the outside of the subunit, while an extended beta-hairpin is found that lines the wall of the exit tunnel in the center of the 70S ribosome. The sequence is that of Large ribosomal subunit protein uL22 from Anaeromyxobacter sp. (strain Fw109-5).